Consider the following 200-residue polypeptide: Recombination protein RecR (200 aa).

The segment at 58-73 adopts a C4-type zinc-finger fold; it reads CSLCCNLTDEDPCSIC. A Toprim domain is found at 81 to 176; it reads NLLCVVEEPR…KVTRIAHGIP (96 aa).

It belongs to the RecR family.

In terms of biological role, may play a role in DNA repair. It seems to be involved in an RecBC-independent recombinational process of DNA repair. It may act with RecF and RecO. The chain is Recombination protein RecR from Desulforamulus reducens (strain ATCC BAA-1160 / DSM 100696 / MI-1) (Desulfotomaculum reducens).